Here is a 138-residue protein sequence, read N- to C-terminus: Rubber elongation factor protein (138 aa).

At Ala2 the chain carries N-acetylalanine.

It belongs to the REF/SRPP family. In terms of assembly, in solution, able to form amyloid fibers and aggregates rich in beta-sheets. Interaction with membrane stabilizes the protein, inhibiting the amyloid state and aggregation. In terms of processing, not glycosylated. As to expression, localized in all laticifer layers.

Its subcellular location is the cytoplasm. May be part of the rubber biosynthesis machinery. Plays a role in rubber elongation. This is Rubber elongation factor protein from Hevea brasiliensis (Para rubber tree).